A 106-amino-acid chain; its full sequence is Pyrimidine/purine nucleoside phosphorylase (106 aa).

It belongs to the nucleoside phosphorylase PpnP family.

The catalysed reaction is a purine D-ribonucleoside + phosphate = a purine nucleobase + alpha-D-ribose 1-phosphate. It carries out the reaction adenosine + phosphate = alpha-D-ribose 1-phosphate + adenine. It catalyses the reaction cytidine + phosphate = cytosine + alpha-D-ribose 1-phosphate. The enzyme catalyses guanosine + phosphate = alpha-D-ribose 1-phosphate + guanine. The catalysed reaction is inosine + phosphate = alpha-D-ribose 1-phosphate + hypoxanthine. It carries out the reaction thymidine + phosphate = 2-deoxy-alpha-D-ribose 1-phosphate + thymine. It catalyses the reaction uridine + phosphate = alpha-D-ribose 1-phosphate + uracil. The enzyme catalyses xanthosine + phosphate = alpha-D-ribose 1-phosphate + xanthine. In terms of biological role, catalyzes the phosphorolysis of diverse nucleosides, yielding D-ribose 1-phosphate and the respective free bases. Can use uridine, adenosine, guanosine, cytidine, thymidine, inosine and xanthosine as substrates. Also catalyzes the reverse reactions. The protein is Pyrimidine/purine nucleoside phosphorylase of Burkholderia ambifaria (strain ATCC BAA-244 / DSM 16087 / CCUG 44356 / LMG 19182 / AMMD) (Burkholderia cepacia (strain AMMD)).